Reading from the N-terminus, the 290-residue chain is uncharacterized protein (290 aa).

Residues 161-216 (SNQREVESLEQLVHEQLNKLNTESKMEFENRKNDTKNEVQQLSARIVELHNLLAVS) adopt a coiled-coil conformation. The chain crosses the membrane as a helical span at residues 236 to 256 (AGVVMAFTGFLVLVIPFGLGV).

It is found in the mitochondrion membrane. This is an uncharacterized protein from Schizosaccharomyces pombe (strain 972 / ATCC 24843) (Fission yeast).